Reading from the N-terminus, the 142-residue chain is Large ribosomal subunit protein uL13 (142 aa).

This sequence belongs to the universal ribosomal protein uL13 family. In terms of assembly, part of the 50S ribosomal subunit.

Its function is as follows. This protein is one of the early assembly proteins of the 50S ribosomal subunit, although it is not seen to bind rRNA by itself. It is important during the early stages of 50S assembly. The polypeptide is Large ribosomal subunit protein uL13 (Pseudomonas entomophila (strain L48)).